The sequence spans 256 residues: Eukaryotic translation initiation factor 3 subunit J (256 aa).

Acidic residues-rich tracts occupy residues 1 to 14 (MAEN…DFEP) and 35 to 54 (EGED…EEAE). Disordered stretches follow at residues 1–109 (MAEN…SPEE) and 214–237 (QSKA…MKND). The segment covering 55 to 101 (AATKQEAQKTVEPKVSEKKKLLEKIREKEKLHKKRQEEVNQQEKEGT) has biased composition (basic and acidic residues). The stretch at 70–99 (SEKKKLLEKIREKEKLHKKRQEEVNQQEKE) forms a coiled coil.

This sequence belongs to the eIF-3 subunit J family. As to quaternary structure, component of the eukaryotic translation initiation factor 3 (eIF-3) complex, which is composed of 13 subunits: eif3a, eif3b, eif3c, eif3d, eif3e, eif3f, eif3g, eif3h, eif3i, eif3j, eif3k, eif3l and eif3m.

The protein resides in the cytoplasm. Its function is as follows. Component of the eukaryotic translation initiation factor 3 (eIF-3) complex, which is involved in protein synthesis of a specialized repertoire of mRNAs and, together with other initiation factors, stimulates binding of mRNA and methionyl-tRNAi to the 40S ribosome. The eIF-3 complex specifically targets and initiates translation of a subset of mRNAs involved in cell proliferation. In Xenopus tropicalis (Western clawed frog), this protein is Eukaryotic translation initiation factor 3 subunit J (eif3j).